The following is a 462-amino-acid chain: Sensor histidine kinase ZraS (462 aa).

Topologically, residues 1 to 14 (MNVMRLSKDSVAVG) are cytoplasmic. The helical transmembrane segment at 15–35 (LSWLLTGLILLLVCLFSALIV) threads the bilayer. The Periplasmic portion of the chain corresponds to 36 to 197 (RDYGRENEAA…ADHARGLRNM (162 aa)). A helical membrane pass occupies residues 198-218 (VIMLCAAGVVMAATVLAQFWF). The Cytoplasmic segment spans residues 219 to 462 (RRYQRSRKQL…VNGQQKDEQG (244 aa)). The Histidine kinase domain occupies 247-455 (GVAHEIRNPL…LFTFYLPVNG (209 aa)). Residue His-250 is modified to Phosphohistidine; by autocatalysis.

Post-translationally, autophosphorylated.

The protein resides in the cell inner membrane. The catalysed reaction is ATP + protein L-histidine = ADP + protein N-phospho-L-histidine.. Its activity is regulated as follows. Activity of the ZraS/ZraR two-component system is repressed by the zinc-bound form of ZraP, which probably interacts with the periplasmic region of ZraS. Part of the Zra signaling pathway, an envelope stress response (ESR) system composed of the periplasmic accessory protein ZraP, the histidine kinase ZraS and the transcriptional regulator ZraR. The ZraPSR system contributes to antibiotic resistance and is important for membrane integrity in the presence of membrane-targeting biocides. ZraS is a member of the two-component regulatory system ZraS/ZraR. Functions as a membrane-associated sensor kinase that phosphorylates ZraR in response to high concentrations of Zn(2+) or Pb(2+) in the medium. The sequence is that of Sensor histidine kinase ZraS (zraS) from Klebsiella oxytoca.